The chain runs to 176 residues: RNA polymerase sigma factor SigZ (176 aa).

Positions D30–L43 match the Polymerase core binding motif. Residues Q125–Q144 constitute a DNA-binding region (H-T-H motif).

Belongs to the sigma-70 factor family. ECF subfamily.

In terms of biological role, sigma factors are initiation factors that promote the attachment of RNA polymerase to specific initiation sites and are then released. The polypeptide is RNA polymerase sigma factor SigZ (sigZ) (Bacillus subtilis (strain 168)).